The chain runs to 393 residues: NAD(P)H-quinone oxidoreductase subunit H, chloroplastic (393 aa).

The protein belongs to the complex I 49 kDa subunit family. NDH is composed of at least 16 different subunits, 5 of which are encoded in the nucleus.

Its subcellular location is the plastid. It localises to the chloroplast thylakoid membrane. It carries out the reaction a plastoquinone + NADH + (n+1) H(+)(in) = a plastoquinol + NAD(+) + n H(+)(out). The catalysed reaction is a plastoquinone + NADPH + (n+1) H(+)(in) = a plastoquinol + NADP(+) + n H(+)(out). Its function is as follows. NDH shuttles electrons from NAD(P)H:plastoquinone, via FMN and iron-sulfur (Fe-S) centers, to quinones in the photosynthetic chain and possibly in a chloroplast respiratory chain. The immediate electron acceptor for the enzyme in this species is believed to be plastoquinone. Couples the redox reaction to proton translocation, and thus conserves the redox energy in a proton gradient. In Solanum tuberosum (Potato), this protein is NAD(P)H-quinone oxidoreductase subunit H, chloroplastic.